The chain runs to 544 residues: Phosphomannomutase (544 aa).

The Phosphoserine intermediate role is filled by S145. 4 residues coordinate Mg(2+): S145, D297, D299, and D301.

This sequence belongs to the phosphohexose mutase family. It depends on Mg(2+) as a cofactor.

It catalyses the reaction alpha-D-mannose 1-phosphate = D-mannose 6-phosphate. This chain is Phosphomannomutase (manB), found in Mycoplasmoides pirum (Mycoplasma pirum).